We begin with the raw amino-acid sequence, 56 residues long: RGICSEPKVVGPCKAGLRRFYYDSETGECKPFIYGGCKGNKNNFETLHACRGICRA.

Positions 4–54 (CSEPKVVGPCKAGLRRFYYDSETGECKPFIYGGCKGNKNNFETLHACRGIC) constitute a BPTI/Kunitz inhibitor domain. Cystine bridges form between Cys-4-Cys-54, Cys-13-Cys-37, and Cys-29-Cys-50.

Belongs to the venom Kunitz-type family. Sea anemone type 2 potassium channel toxin subfamily. Post-translationally, contains 3 disulfide bonds.

Its subcellular location is the secreted. It localises to the nematocyst. Dual-function toxin that inhibits both serine proteases and voltage-gated potassium channels. Has potent activity on both trypsin (Ki=28 nM) and chymotrypsin (Kd=1.8 nM). Shows inhibitory activity against 4 of the 7 potassium channels tested (rKv1.1/KCNA1; IC(50)=142.6 nM, hKv1.3/KCNA3; IC(50)=40.7 nM, rKv1.6/KCNA6; IC(50)=154.9 nM and drosophila Shaker; IC(50)=433.1 nM). Has an anti-inflammatory effect in LPS-activated macrophages in vitro, specifically reducing release of TNF and IL6 but not nitric oxide and reducing expression of IL1B precursor. In contrast to some paralogs, this protein decreases reactive oxygen species (ROS) level in the oxidative stress agent 6-hydroxydopamine (6-OHDA)-induced neurotoxicity model, but does not show cytoprotective activity on neuroblastoma cells. This protein also shows a weak free-radical scavenging activity. In vivo, when tested in a mice model of acute local inflammation, it reduces paw edema during 24 hours. In addition, it also reduces the synthesis of TNF in this model. The protein is PI-stichotoxin-Hcr2f of Radianthus crispa (Leathery sea anemone).